Consider the following 148-residue polypeptide: Homoprotocatechuate degradative operon repressor (148 aa).

The 133-residue stretch at His-2–Ala-134 folds into the HTH marR-type domain.

Repressor for the homoprotocatechuate catabolic pathway hpc operon. This chain is Homoprotocatechuate degradative operon repressor (hpcR), found in Escherichia coli.